The chain runs to 277 residues: Large ribosomal subunit protein uL2 (277 aa).

Basic residues-rich tracts occupy residues 210–219 (RARWAGKRPQ) and 259–277 (TRSKKARSNKFIVRSRNKK). Residues 210 to 277 (RARWAGKRPQ…KFIVRSRNKK (68 aa)) form a disordered region.

This sequence belongs to the universal ribosomal protein uL2 family. In terms of assembly, part of the 50S ribosomal subunit. Forms a bridge to the 30S subunit in the 70S ribosome.

Its function is as follows. One of the primary rRNA binding proteins. Required for association of the 30S and 50S subunits to form the 70S ribosome, for tRNA binding and peptide bond formation. It has been suggested to have peptidyltransferase activity; this is somewhat controversial. Makes several contacts with the 16S rRNA in the 70S ribosome. This is Large ribosomal subunit protein uL2 from Ligilactobacillus salivarius (strain UCC118) (Lactobacillus salivarius).